The chain runs to 263 residues: Small ribosomal subunit protein eS4, Y isoform 1 (263 aa).

Positions 42–104 (LPLIVFLRNR…TGEHFRLVYD (63 aa)) constitute an S4 RNA-binding domain.

The protein belongs to the eukaryotic ribosomal protein eS4 family.

This Homo sapiens (Human) protein is Small ribosomal subunit protein eS4, Y isoform 1 (RPS4Y1).